A 251-amino-acid chain; its full sequence is 1-(5-phosphoribosyl)-5-[(5-phosphoribosylamino)methylideneamino] imidazole-4-carboxamide isomerase (251 aa).

D8 functions as the Proton acceptor in the catalytic mechanism. D131 functions as the Proton donor in the catalytic mechanism.

This sequence belongs to the HisA/HisF family.

The protein localises to the cytoplasm. It carries out the reaction 1-(5-phospho-beta-D-ribosyl)-5-[(5-phospho-beta-D-ribosylamino)methylideneamino]imidazole-4-carboxamide = 5-[(5-phospho-1-deoxy-D-ribulos-1-ylimino)methylamino]-1-(5-phospho-beta-D-ribosyl)imidazole-4-carboxamide. The protein operates within amino-acid biosynthesis; L-histidine biosynthesis; L-histidine from 5-phospho-alpha-D-ribose 1-diphosphate: step 4/9. This chain is 1-(5-phosphoribosyl)-5-[(5-phosphoribosylamino)methylideneamino] imidazole-4-carboxamide isomerase, found in Burkholderia cenocepacia (strain HI2424).